Here is a 432-residue protein sequence, read N- to C-terminus: Adenylosuccinate synthetase (432 aa).

Residues 12–18 (GDEGKGK) and 40–42 (GHT) contribute to the GTP site. The active-site Proton acceptor is Asp13. Positions 13 and 40 each coordinate Mg(2+). IMP-binding positions include 13–16 (DEGK), 38–41 (NAGH), Thr131, Arg145, Gln226, Thr241, and Arg305. The Proton donor role is filled by His41. Residue 301–307 (ATTGRPR) participates in substrate binding. Residues Arg307, 333–335 (KLD), and 415–417 (STG) each bind GTP.

This sequence belongs to the adenylosuccinate synthetase family. As to quaternary structure, homodimer. Mg(2+) serves as cofactor.

The protein localises to the cytoplasm. The enzyme catalyses IMP + L-aspartate + GTP = N(6)-(1,2-dicarboxyethyl)-AMP + GDP + phosphate + 2 H(+). It functions in the pathway purine metabolism; AMP biosynthesis via de novo pathway; AMP from IMP: step 1/2. In terms of biological role, plays an important role in the de novo pathway of purine nucleotide biosynthesis. Catalyzes the first committed step in the biosynthesis of AMP from IMP. The sequence is that of Adenylosuccinate synthetase from Magnetococcus marinus (strain ATCC BAA-1437 / JCM 17883 / MC-1).